Reading from the N-terminus, the 1074-residue chain is Pleckstrin homology domain-containing family M member 1 (1074 aa).

Residues 40–182 enclose the RUN domain; it reads TSEDGDANTM…LSFELSYKSA (143 aa). 3 disordered regions span residues 214-244, 272-336, and 382-454; these read QRKESLDSISHSSGSEDIEVQHSGHKIRRNR, LQEN…MFQT, and DEKQ…PPQE. Phosphoserine is present on Ser-218. Composition is skewed to polar residues over residues 313–329 and 393–404; these read SKAQVNSAPSSGPNQEP and PAQSTSDQQPSS. Phosphoserine is present on residues Ser-433, Ser-436, and Ser-491. The segment at 506–526 is disordered; sequence GNAQPAPAPAPAPAPAPAPAP. Residues 511-525 are compositionally biased toward pro residues; that stretch reads APAPAPAPAPAPAPA. The region spanning 551 to 642 is the PH 1 domain; the sequence is GLMKLGTVAR…WLDRVREALQ (92 aa). Residues 649-655 carry the LIR motif; the sequence is EDEWVNI. The segment at 661-680 is disordered; the sequence is AEDAPEAPPDSLPPYSTLLP. The interval 672-1074 is interaction with RAB7A; it reads LPPYSTLLPE…RKYQEQNVVS (403 aa). In terms of domain architecture, PH 2 spans 701–795; the sequence is DAIKESLLYL…WRDLVRKVLA (95 aa). The Phorbol-ester/DAG-type zinc-finger motif lies at 1004 to 1058; sequence QHVYHCDLCTQRGFICQICHHQDIIFPFEFDTTVRCAECRTVFHQSCQAVVRKGC.

Interacts (via N- and C-terminus) with RAB7A (GTP-bound form). Simultaneously interacts with RAB7A and ARL8B; bringing about clustering and fusion of late endosomes and lysosomes. Interacts (via RUN domain) with ARL8B (GTP-bound form); the interaction is required for PLEKHM1 localization to lysosomes and for ARL8B function in delivery and degradation of endocytic and autophagic cargo in lysosomes. PLEKHM1 and PLEKHM2 compete for interaction with ARL8B. Interacts with ARL8A; the interaction is weaker than with ARL8B. Interacts with VPS41, VPS11, VPS18, VPS33A and VPS39; indicative for an association with the HOPS complex; the interactions with, at least, VPS41, VPS11, VPS18 and VPS33A require ARL8B. Interacts with GABARAP, GABARAPL, GABARAPL2, MAP1LC3A, MAP1LC3B and MAP1LC3C. Interacts with PAFAH1B. Interacts (via N- and C-terminus) with NDEL1. Interacts (via C-terminus) with MAP3K7. Interacts (via N- and C-terminus) with FAM98A. Interacts (via C-terminus) with DEF8; this interaction is weak but increased in a RAB7A-dependent manner. May interact with sialyl-lex-positive protein.

The protein resides in the autolysosome membrane. It is found in the endosome membrane. Its subcellular location is the late endosome membrane. It localises to the lysosome membrane. Its function is as follows. Acts as a multivalent adapter protein that regulates Rab7-dependent and HOPS complex-dependent fusion events in the endolysosomal system and couples autophagic and the endocytic trafficking pathways. Acts as a dual effector of RAB7A and ARL8B that simultaneously binds these GTPases, bringing about clustering and fusion of late endosomes and lysosomes. Required for late stages of endolysosomal maturation, facilitating both endocytosis-mediated degradation of growth factor receptors and autophagosome clearance. Interaction with Arl8b is a crucial factor in the terminal maturation of autophagosomes and to mediate autophagosome-lysosome fusion. Positively regulates lysosome peripheral distribution and ruffled border formation in osteoclasts. May be involved in negative regulation of endocytic transport from early endosome to late endosome/lysosome implicating its association with Rab7. May have a role in sialyl-lex-mediated transduction of apoptotic signals. Involved in bone resorption. The polypeptide is Pleckstrin homology domain-containing family M member 1 (Mus musculus (Mouse)).